The chain runs to 339 residues: tRNA pseudouridine synthase B (339 aa).

Catalysis depends on Asp-40, which acts as the Nucleophile. The RPE1 insert domain maps to 262 to 307 (FRRLSKFAYREEFEENTERSTAAYTLVREDANTGLTYKLPLEVELS).

The protein belongs to the pseudouridine synthase TruB family. Type 1 subfamily.

It carries out the reaction uridine(55) in tRNA = pseudouridine(55) in tRNA. Functionally, responsible for synthesis of pseudouridine from uracil-55 in the psi GC loop of transfer RNAs. The protein is tRNA pseudouridine synthase B of Rickettsia felis (strain ATCC VR-1525 / URRWXCal2) (Rickettsia azadi).